Reading from the N-terminus, the 732-residue chain is Catalase-peroxidase (732 aa).

The segment at residues 97–220 (WHSAGTYRTG…LAAVQMGLIY (124 aa)) is a cross-link (tryptophyl-tyrosyl-methioninium (Trp-Tyr) (with M-246)). Catalysis depends on histidine 98, which acts as the Proton acceptor. Residues 220–246 (YVNPEGPDGKPDPVAAGKDIRETFGRM) constitute a cross-link (tryptophyl-tyrosyl-methioninium (Tyr-Met) (with W-97)). Histidine 261 contacts heme b.

This sequence belongs to the peroxidase family. Peroxidase/catalase subfamily. In terms of assembly, homodimer or homotetramer. The cofactor is heme b. Post-translationally, formation of the three residue Trp-Tyr-Met cross-link is important for the catalase, but not the peroxidase activity of the enzyme.

The catalysed reaction is H2O2 + AH2 = A + 2 H2O. It carries out the reaction 2 H2O2 = O2 + 2 H2O. Its function is as follows. Bifunctional enzyme with both catalase and broad-spectrum peroxidase activity. This Chlorobium phaeobacteroides (strain BS1) protein is Catalase-peroxidase.